The chain runs to 126 residues: MAKLTKDELIEAFKEMTLIELSEFVKEFEEVFEVTAAAPVAVAAAGAAPAAAEEEKTEFDVVLEDAGAKKIGVIKAVRELVSGLGLKEAKELVEGAPKAILEGANKDDAEAAKAKLEEAGAKVTLK.

It belongs to the bacterial ribosomal protein bL12 family. In terms of assembly, homodimer. Part of the ribosomal stalk of the 50S ribosomal subunit. Forms a multimeric L10(L12)X complex, where L10 forms an elongated spine to which 2 to 4 L12 dimers bind in a sequential fashion. Binds GTP-bound translation factors.

Its function is as follows. Forms part of the ribosomal stalk which helps the ribosome interact with GTP-bound translation factors. Is thus essential for accurate translation. The sequence is that of Large ribosomal subunit protein bL12 from Corynebacterium diphtheriae (strain ATCC 700971 / NCTC 13129 / Biotype gravis).